The sequence spans 198 residues: Rac-like GTP-binding protein ARAC3 (198 aa).

GTP contacts are provided by residues 13–21 (GDGAVGKTC), 31–38 (FPTDYVPT), 60–64 (DTAGQ), and 118–121 (TKLD). The Effector region signature appears at 35-43 (YVPTVFDNF). A lipid anchor (S-palmitoyl cysteine) is attached at Cys158. Residue Cys195 is modified to Cysteine methyl ester. A lipid anchor (S-geranylgeranyl cysteine) is attached at Cys195. The propeptide at 196-198 (SIL) is removed in mature form.

The protein belongs to the small GTPase superfamily. Rho family. Interacts with Rho GDP-dissociation inhibitor 1 and ICR1. Binds to SPK1 when in the inactive GDP-bound form. In terms of tissue distribution, ubiquitous. Preferentially expressed at the tip of root hairs.

It is found in the cytoplasm. It localises to the cell membrane. Its function is as follows. Inactive GDP-bound Rho GTPases reside in the cytosol, are found in a complex with Rho GDP-dissociation inhibitors (Rho GDIs), and are released from the GDI protein in order to translocate to membranes upon activation. Involved in cell polarity control during the actin-dependent tip growth of root hairs, thus regulating root hair length and root hair initiation. Contributes, in a SPK1-dependent manner, to the prevention of cortical microtubules organization into parallel arrays oriented perpendicular to the axis of cell elongation to limit anisotropic cell growth during petal development. SPK1-dependent activation is required for auxin-mediated inhibition of PIN2 internalization during gravitropic responses. This Arabidopsis thaliana (Mouse-ear cress) protein is Rac-like GTP-binding protein ARAC3.